Here is a 233-residue protein sequence, read N- to C-terminus: UPF0502 protein YPTS_2082 (233 aa).

Belongs to the UPF0502 family.

The polypeptide is UPF0502 protein YPTS_2082 (Yersinia pseudotuberculosis serotype IB (strain PB1/+)).